The following is a 192-amino-acid chain: Holliday junction branch migration complex subunit RuvA (192 aa).

Residues 1 to 61 form a domain I region; it reads MFEYLKGIVA…DTGITLYGFL (61 aa). The interval 62–137 is domain II; it reads SLEDKELFLK…KLGDYVKKSA (76 aa). The interval 137–140 is flexible linker; that stretch reads AVAT. The domain III stretch occupies residues 141-192; it reads DLTPSLQDALLALVALGYTQKEVDRITPKLAKLPENTADGYIKEALALLLKK.

It belongs to the RuvA family. As to quaternary structure, homotetramer. Forms an RuvA(8)-RuvB(12)-Holliday junction (HJ) complex. HJ DNA is sandwiched between 2 RuvA tetramers; dsDNA enters through RuvA and exits via RuvB. An RuvB hexamer assembles on each DNA strand where it exits the tetramer. Each RuvB hexamer is contacted by two RuvA subunits (via domain III) on 2 adjacent RuvB subunits; this complex drives branch migration. In the full resolvosome a probable DNA-RuvA(4)-RuvB(12)-RuvC(2) complex forms which resolves the HJ.

The protein resides in the cytoplasm. Its function is as follows. The RuvA-RuvB-RuvC complex processes Holliday junction (HJ) DNA during genetic recombination and DNA repair, while the RuvA-RuvB complex plays an important role in the rescue of blocked DNA replication forks via replication fork reversal (RFR). RuvA specifically binds to HJ cruciform DNA, conferring on it an open structure. The RuvB hexamer acts as an ATP-dependent pump, pulling dsDNA into and through the RuvAB complex. HJ branch migration allows RuvC to scan DNA until it finds its consensus sequence, where it cleaves and resolves the cruciform DNA. The polypeptide is Holliday junction branch migration complex subunit RuvA (Lactobacillus gasseri (strain ATCC 33323 / DSM 20243 / BCRC 14619 / CIP 102991 / JCM 1131 / KCTC 3163 / NCIMB 11718 / NCTC 13722 / AM63)).